The following is a 118-amino-acid chain: Fluoride-specific ion channel FluC 1 (118 aa).

4 helical membrane-spanning segments follow: residues 5 to 25, 39 to 59, 61 to 81, and 98 to 118; these read FLLVGFGASLGAMLRYGISIF, FFINITGSFLLGFLVSTALGP, WQLFLGTGFMGGYTTFSTFKV, and YVGLTYLCGLIAAFIGIMLGV. Na(+) is bound by residues Gly71 and Thr74.

The protein belongs to the fluoride channel Fluc/FEX (TC 1.A.43) family.

The protein localises to the cell membrane. It carries out the reaction fluoride(in) = fluoride(out). Its activity is regulated as follows. Na(+) is not transported, but it plays an essential structural role and its presence is essential for fluoride channel function. Fluoride-specific ion channel. Important for reducing fluoride concentration in the cell, thus reducing its toxicity. The chain is Fluoride-specific ion channel FluC 1 from Listeria innocua serovar 6a (strain ATCC BAA-680 / CLIP 11262).